The chain runs to 654 residues: Endoplasmic reticulum chaperone BiP (654 aa).

A signal peptide spans 1–18; sequence MKFPMVAAALLLLCAVRA. The interval 1–80 is required for interaction with ELAPOR1; the sequence is MKFPMVAAAL…EGERLIGDAA (80 aa). 36–39 lines the ATP pocket; sequence GTTY. A Phosphoserine modification is found at Ser-86. ATP is bound at residue Lys-96. The residue at position 125 (Lys-125) is an N6-acetyllysine. The tract at residues 125–280 is nucleotide-binding (NBD); the sequence is KPYIQVDIGG…KKKTGKDVRK (156 aa). At Tyr-160 the chain carries 3'-nitrotyrosine. Lys-213 bears the N6-acetyllysine mark. Residue 227–229 coordinates ATP; it reads GGT. An N6-acetyllysine modification is found at Lys-271. An ATP-binding site is contributed by 293–300; the sequence is EKAKRALS. An N6-acetyllysine modification is found at Lys-326. Lys-352 participates in a covalent cross-link: Glycyl lysine isopeptide (Lys-Gly) (interchain with G-Cter in SUMO2). Lys-353 carries the N6-acetyllysine; alternate modification. Residue Lys-353 forms a Glycyl lysine isopeptide (Lys-Gly) (interchain with G-Cter in SUMO1); alternate linkage. An ATP-binding site is contributed by 364-367; the sequence is GSTR. The tract at residues 409-419 is interdomain linker; it reads QDTGDLVLLDV. The interval 420–500 is substrate-binding (SBD); it reads CPLTLGIETV…PRGVPQIEVT (81 aa). Position 447 is an N6-succinyllysine (Lys-447). Arg-492 is modified (omega-N-methylarginine). Thr-518 is modified (O-AMP-threonine; alternate). Position 518 is a phosphothreonine; alternate (Thr-518). Lys-585 carries the post-translational modification N6,N6,N6-trimethyllysine; by METTL21A; in vitro. The residue at position 585 (Lys-585) is an N6,N6-dimethyllysine; alternate. Position 585 is an N6-methyllysine; alternate (Lys-585). Lys-591 carries the post-translational modification N6-methyllysine. Positions 632 to 654 are disordered; it reads SKLYGSAGPPPTGEEDTSEKDEL. A phosphothreonine mark is found at Thr-643 and Thr-648. The segment covering 644 to 654 has biased composition (acidic residues); the sequence is GEEDTSEKDEL. Phosphoserine is present on Ser-649. The Prevents secretion from ER motif lies at 651 to 654; that stretch reads KDEL.

It belongs to the heat shock protein 70 family. As to quaternary structure, monomer and homooligomer; homooligomerization via the interdomain linker inactivates the chaperone activity and acts as a storage of HSPA5/BiP molecules. Interacts with DNAJC1 (via J domain). Component of an EIF2 complex at least composed of CELF1/CUGBP1, CALR, CALR3, EIF2S1, EIF2S2, HSP90B1 and HSPA5. Part of a large chaperone multiprotein complex comprising DNAJB11, HSP90B1, HSPA5, HYOU, PDIA2, PDIA4, PDIA6, PPIB, SDF2L1, UGGT1 and very small amounts of ERP29, but not, or at very low levels, CALR nor CANX. Interacts with TMEM132A and TRIM21. May form a complex with ERLEC1, OS9, SEL1L and SYVN1. Interacts with DNAJC10. Interacts with DNAJB9/ERdj4; leading to recruit HSPA5/BiP to ERN1/IRE1. Interacts with ERN1/IRE1 (via luminal domain); the interaction takes place following interaction with DNAJB9/ERdj4 and leads to inactivate ERN1/IRE1, the interaction also competitively inhibits ERN1 interaction with MANF. Interacts directly with MANF (via SAP domain); the interaction inhibits ATP binding to HSPA5/BiP and subsequent nucleotide exchange. Interacts with EIF2AK3/PERK (via luminal domain); interaction leads to inactivate EIF2AK3/PERK. Interacts with MX1. Interacts with METTL23. Interacts with CEMIP; the interaction induces calcium leakage from the endoplasmic reticulum and cell migration. Interacts with PCSK4 form; the interaction takes place in the endoplasmic reticulum. Interacts with CIPC. Interacts with CCDC88B (via C-terminus); the interaction opposes ERN1-mediated JNK activation, protecting against apoptosis. Interacts with INPP5K; necessary for INPP5K localization at the endoplasmic reticulum. Interacts with LOXL2; leading to activate the ERN1/IRE1-XBP1 pathway of the unfolded protein response. Interacts with CLU under stressed condition; interaction increases CLU protein stability; facilitates its retrotranslocation and redistribution to the mitochondria; cooperatively suppress stress-induced apoptosis by stabilizing mitochondrial membrane integrity. Interacts with CCDC47. Interacts with CLN3. Interacts with ELAPOR1; may regulate the function of HSPA5 in apoptosis and cell proliferation. Interacts with CASP7. Interacts with ILDR2; the interaction stabilizes ILDR2 expression. Interacts with ADAM7. In terms of processing, in unstressed cells, AMPylation at Thr-518 by FICD inactivates the chaperome activity: AMPylated form is locked in a relatively inert state and only weakly stimulated by J domain-containing proteins. In response to endoplasmic reticulum stress, de-AMPylation by the same protein, FICD, restores the chaperone activity.

The protein resides in the endoplasmic reticulum lumen. Its subcellular location is the melanosome. It localises to the cytoplasm. It is found in the cell surface. The catalysed reaction is ATP + H2O = ADP + phosphate + H(+). Its activity is regulated as follows. The chaperone activity is regulated by ATP-induced allosteric coupling of the nucleotide-binding (NBD) and substrate-binding (SBD) domains. In the ADP-bound and nucleotide-free (apo) states, the two domains have little interaction. In contrast, in the ATP-bound state the two domains are tightly coupled, which results in drastically accelerated kinetics in both binding and release of polypeptide substrates. J domain-containing co-chaperones (DNAJB9/ERdj4 or DNAJC10/ERdj5) stimulate the ATPase activity and are required for efficient substrate recognition by HSPA5/BiP. Homooligomerization inactivates participating HSPA5/BiP protomers and probably act as reservoirs to store HSPA5/BiP molecules when they are not needed by the cell. Endoplasmic reticulum chaperone that plays a key role in protein folding and quality control in the endoplasmic reticulum lumen. Involved in the correct folding of proteins and degradation of misfolded proteins via its interaction with DNAJC10/ERdj5, probably to facilitate the release of DNAJC10/ERdj5 from its substrate. Acts as a key repressor of the EIF2AK3/PERK and ERN1/IRE1-mediated unfolded protein response (UPR). In the unstressed endoplasmic reticulum, recruited by DNAJB9/ERdj4 to the luminal region of ERN1/IRE1, leading to disrupt the dimerization of ERN1/IRE1, thereby inactivating ERN1/IRE1. Also binds and inactivates EIF2AK3/PERK in unstressed cells. Accumulation of misfolded protein in the endoplasmic reticulum causes release of HSPA5/BiP from ERN1/IRE1 and EIF2AK3/PERK, allowing their homodimerization and subsequent activation. Plays an auxiliary role in post-translational transport of small presecretory proteins across endoplasmic reticulum (ER). May function as an allosteric modulator for SEC61 channel-forming translocon complex, likely cooperating with SEC62 to enable the productive insertion of these precursors into SEC61 channel. Appears to specifically regulate translocation of precursors having inhibitory residues in their mature region that weaken channel gating. May also play a role in apoptosis and cell proliferation. The chain is Endoplasmic reticulum chaperone BiP from Cricetulus griseus (Chinese hamster).